The chain runs to 250 residues: Leucyl/phenylalanyl-tRNA--protein transferase (250 aa).

Belongs to the L/F-transferase family.

The protein localises to the cytoplasm. The enzyme catalyses N-terminal L-lysyl-[protein] + L-leucyl-tRNA(Leu) = N-terminal L-leucyl-L-lysyl-[protein] + tRNA(Leu) + H(+). The catalysed reaction is N-terminal L-arginyl-[protein] + L-leucyl-tRNA(Leu) = N-terminal L-leucyl-L-arginyl-[protein] + tRNA(Leu) + H(+). It catalyses the reaction L-phenylalanyl-tRNA(Phe) + an N-terminal L-alpha-aminoacyl-[protein] = an N-terminal L-phenylalanyl-L-alpha-aminoacyl-[protein] + tRNA(Phe). In terms of biological role, functions in the N-end rule pathway of protein degradation where it conjugates Leu, Phe and, less efficiently, Met from aminoacyl-tRNAs to the N-termini of proteins containing an N-terminal arginine or lysine. This Cupriavidus pinatubonensis (strain JMP 134 / LMG 1197) (Cupriavidus necator (strain JMP 134)) protein is Leucyl/phenylalanyl-tRNA--protein transferase.